Reading from the N-terminus, the 205-residue chain is Anaerobic dimethyl sulfoxide reductase chain B (205 aa).

4Fe-4S ferredoxin-type domains are found at residues 4–32 (YGFY…LGTE), 57–89 (NIFA…KNAD), and 90–119 (GFVI…YDAQ). [4Fe-4S] cluster is bound by residues cysteine 13, cysteine 16, cysteine 19, cysteine 23, cysteine 67, cysteine 70, cysteine 75, cysteine 79, cysteine 99, cysteine 102, cysteine 105, cysteine 109, cysteine 126, cysteine 129, cysteine 141, and cysteine 145.

In terms of assembly, heterotrimeric enzyme composed of a catalytic heterodimer (DmsAB) and a membrane anchor protein (DmsC). The cofactor is [4Fe-4S] cluster.

Its function is as follows. Electron transfer subunit of the terminal reductase during anaerobic growth on various sulfoxide and N-oxide compounds. This is Anaerobic dimethyl sulfoxide reductase chain B (dmsB) from Haemophilus influenzae (strain ATCC 51907 / DSM 11121 / KW20 / Rd).